The sequence spans 319 residues: MASPTVKLNSGHDMPLVGFGLWKVNNETCADQVYEAIKAGYRLFDGACDYGNEVECGQGVARAIKEGIVKREELFIVSKLWNSFHEGDRVEPICRKQLADWGVDYFDLYIVHFPVALKYVDPAVRYPPGWNSESGKIEFSNATIQETWTAMESLVDKKLARSIGVSNFSAQLLMDLLRYARVRPATLQIEHHPYLTQPRLVEYAQKEGIAVTAYSSFGPLSFLELEVKNAVDTPPLFEHNTIKSLAEKYGKTPAQVLLRWATQRGIAVIPKSNNPTRLSQNLEVTGWDLEKSELEAISSLDKGLRFNDPIGYGMYVPIF.

The Proton donor role is filled by tyrosine 50. Histidine 112 provides a ligand contact to substrate. Residues 166-167 (SN), 215-224 (SSFGPLSFLE), and 271-281 (KSNNPTRLSQN) each bind NAD(+).

This sequence belongs to the aldo/keto reductase family.

The catalysed reaction is xylitol + NAD(+) = D-xylose + NADH + H(+). The enzyme catalyses xylitol + NADP(+) = D-xylose + NADPH + H(+). The protein operates within carbohydrate metabolism; D-xylose degradation. Catalyzes the initial reaction in the xylose utilization pathway by reducing D-xylose into xylitol. Xylose is a major component of hemicelluloses such as xylan. Most fungi utilize D-xylose via three enzymatic reactions, xylose reductase (XR), xylitol dehydrogenase (XDH), and xylulokinase, to form xylulose 5-phosphate, which enters pentose phosphate pathway. This Aspergillus oryzae (strain ATCC 42149 / RIB 40) (Yellow koji mold) protein is Probable NAD(P)H-dependent D-xylose reductase xyl1 (xyl1).